We begin with the raw amino-acid sequence, 79 residues long: Calcium/calmodulin-dependent protein kinase II inhibitor 2 (79 aa).

The disordered stretch occupies residues 1 to 21 (MSEILPYGEDKMGRFGADPEG). Positions 43 to 69 (KRPPKLGQIGRAKRVVIEDDRIDDVLK) are inhibitory domain.

Belongs to the CAMK2N family. In terms of assembly, interacts with CAMK2A and CAMK2B in the presence of Ca(2+)/calmodulin or after autophosphorylation.

Its subcellular location is the nucleus. The protein localises to the cytoplasm. The protein resides in the cytosol. It is found in the synapse. Functionally, potent and specific cellular inhibitor of CaM-kinase II (CAMK2). Traps Ca(2+)/calmodulin on CAMK2. This is Calcium/calmodulin-dependent protein kinase II inhibitor 2 (Camk2n2) from Mus musculus (Mouse).